Consider the following 509-residue polypeptide: Cytochrome P450 monooxygenase FUP2 (509 aa).

A run of 2 helical transmembrane segments spans residues 16–36 (FGLALVISALALVSVIIYGCF) and 224–244 (MVEALSFFLTLPGIASVFGIA). Residue cysteine 450 coordinates heme.

Belongs to the cytochrome P450 family. It depends on heme as a cofactor.

It localises to the membrane. It participates in secondary metabolite biosynthesis. Its function is as follows. Cytochrome P450 monooxygenase; part of the gene cluster that mediates the biosynthesis of the mycotoxin fusaproliferin (FUP) that belongs to the class of bicyclic sesterterpenoids. FUP2 introduces a hydroxyl group at the C-24 position resulting in the formation of preterpestacin IIa, which can be further oxidized. The oxidation of the hydroxyl group at C-24 to an aldehyde and further to a carboxylic group takes place via unspecific alcohol and aldehyde dehydrogenases and leads to the shunt products preterpestacin IIc and preterpestacin IIb, respectively. The FUP biosynthetic pathway starts with the enzyme encoded by FUP1 that combines a C-terminal prenyltransferase domain responsible for the synthesis of geranylgeranyl diphosphate with the N-terminal terpene cyclase domain, to yield preterpestacin I. Preterpestacin I is then decorated by oxygenation steps that are catalyzed by two cytochrome P450 monooxygenases. First, FUP2 introduces a hydroxyl group at the C-24 position resulting in the formation of preterpestacin IIa. The second P450 monooxygenase catalyzes the hydroxylation at C-16 and C-17 of preterpestacin IIa, producing preterpestacin III. Subsequently, the FAD-dependent oxidoreductase FUP4 catalyzes the oxidation of the hydroxy group at the C-16 position to a keto group, leading to the formation of (-)-terpestacin, which is the immediate precursor of FUP. The final step in the proposed biosynthetic pathway is the addition of an acetyl group at the C-24 position of terpestacin, which is catalyzed by the acetyltransferase FUP5. In Fusarium proliferatum (strain ET1) (Orchid endophyte fungus), this protein is Cytochrome P450 monooxygenase FUP2.